The sequence spans 184 residues: MLVLASASPRRREILGRFIKDFKVVPSNVSEECSLTEPRTYALELARRKAREVYNRVGGTVIGADTAVSIDGHILGKPGSEEEAYRMLKLLSGRVHRVTTGYCIIHEGEEVSGAVVTEVKFRELSDELIWAYIRTGEPMDKAGAYGIQGKGGLFVEWINGDYYNVVGFPLEIVWKLRELGFGVM.

The active-site Proton acceptor is the D65.

This sequence belongs to the Maf family. YhdE subfamily. The cofactor is a divalent metal cation.

The protein localises to the cytoplasm. It carries out the reaction dTTP + H2O = dTMP + diphosphate + H(+). The catalysed reaction is UTP + H2O = UMP + diphosphate + H(+). Its function is as follows. Nucleoside triphosphate pyrophosphatase that hydrolyzes dTTP and UTP. May have a dual role in cell division arrest and in preventing the incorporation of modified nucleotides into cellular nucleic acids. The polypeptide is dTTP/UTP pyrophosphatase (Thermococcus onnurineus (strain NA1)).